The primary structure comprises 803 residues: Putative metal ion transporter C27B12.12c (803 aa).

Positions 1 to 20 (MSFQQPSNGAQGGNNNALEK) are enriched in polar residues. Residues 1 to 255 (MSFQQPSNGA…SSDVSGSDEN (255 aa)) form a disordered region. Low complexity predominate over residues 21–45 (TSSNEATSSSSTQVSSLSASGISVS). Residues 58–82 (MQVQSSQHLEANVQSPVSSQTTYAT) show a composition bias toward polar residues. 2 stretches are compositionally biased toward basic residues: residues 105–123 (KPKK…RKKI) and 152–166 (QSNK…KHSP). Composition is skewed to low complexity over residues 181–194 (ALSA…QHAS) and 218–253 (SSSS…SGSD). Ser-318 is modified (phosphoserine). Disordered stretches follow at residues 326 to 349 (PRLK…QVDE) and 406 to 431 (FEPH…NNAE). Acidic residues predominate over residues 337 to 347 (DNEDREVDSQV). Positions 406–419 (FEPHWNDLSPHDPN) are enriched in basic and acidic residues. Residues 420–430 (DPSSSLHSNNA) are compositionally biased toward polar residues. Phosphoserine is present on residues Ser-449 and Ser-452. The next 2 membrane-spanning stretches (helical) occupy residues 745–765 (ITLI…FGMN) and 776–796 (LAWF…GWII).

Belongs to the CorA metal ion transporter (MIT) (TC 1.A.35) family.

The protein resides in the cytoplasm. It is found in the membrane. The chain is Putative metal ion transporter C27B12.12c from Schizosaccharomyces pombe (strain 972 / ATCC 24843) (Fission yeast).